We begin with the raw amino-acid sequence, 545 residues long: Glucose-6-phosphate isomerase (545 aa).

Residue glutamate 351 is the Proton donor of the active site. Residues histidine 382 and lysine 510 contribute to the active site.

The protein belongs to the GPI family.

It localises to the cytoplasm. It catalyses the reaction alpha-D-glucose 6-phosphate = beta-D-fructose 6-phosphate. It functions in the pathway carbohydrate biosynthesis; gluconeogenesis. The protein operates within carbohydrate degradation; glycolysis; D-glyceraldehyde 3-phosphate and glycerone phosphate from D-glucose: step 2/4. Functionally, catalyzes the reversible isomerization of glucose-6-phosphate to fructose-6-phosphate. In Shewanella pealeana (strain ATCC 700345 / ANG-SQ1), this protein is Glucose-6-phosphate isomerase.